The following is a 286-amino-acid chain: Beta-lactamase SHV-13 (286 aa).

A signal peptide spans 1-21 (MRYIRLCIISLLATLPLAVHA). Residue Ser66 is the Acyl-ester intermediate of the active site. An intrachain disulfide couples Cys73 to Cys119. Glu164 (proton acceptor) is an active-site residue. Substrate is bound at residue 230–232 (KTG).

The protein belongs to the class-A beta-lactamase family.

It carries out the reaction a beta-lactam + H2O = a substituted beta-amino acid. With respect to regulation, inhibited 16-fold better by the beta-lactamase inhibitor clavulanic acid than by tazobactam. Broad spectrum beta-lactamase which hydrolyzes penicillins, as well as cephalosporins except cephamycins. Also hydrolyzes aztreonam, but not imipenem. Confers highly resistance to ceftazidime, cefotaxime, aztreonam and piperacillin. In Klebsiella pneumoniae, this protein is Beta-lactamase SHV-13 (bla).